The following is a 439-amino-acid chain: Probable guanine deaminase (439 aa).

The Zn(2+) site is built by His76 and His78. Substrate-binding positions include 78-81, 203-204, 231-234, and Asp321; these read HYPQ, RF, and HINE. Zn(2+) is bound by residues His231 and Asp321.

It belongs to the metallo-dependent hydrolases superfamily. ATZ/TRZ family. The cofactor is Zn(2+).

It catalyses the reaction guanine + H2O + H(+) = xanthine + NH4(+). It functions in the pathway purine metabolism; guanine degradation; xanthine from guanine: step 1/1. Functionally, catalyzes the hydrolytic deamination of guanine, producing xanthine and ammonia. In Deinococcus radiodurans (strain ATCC 13939 / DSM 20539 / JCM 16871 / CCUG 27074 / LMG 4051 / NBRC 15346 / NCIMB 9279 / VKM B-1422 / R1), this protein is Probable guanine deaminase (guaD).